The following is a 264-amino-acid chain: Phosphonoacetaldehyde hydrolase (264 aa).

Asp-9 acts as the Nucleophile in catalysis. Asp-9 and Ala-11 together coordinate Mg(2+). Lys-50 (schiff-base intermediate with substrate) is an active-site residue. Residue Asp-183 participates in Mg(2+) binding.

The protein belongs to the HAD-like hydrolase superfamily. PhnX family. In terms of assembly, homodimer. The cofactor is Mg(2+).

The catalysed reaction is phosphonoacetaldehyde + H2O = acetaldehyde + phosphate + H(+). Functionally, involved in phosphonate degradation. In Bacillus cereus (strain ZK / E33L), this protein is Phosphonoacetaldehyde hydrolase.